The primary structure comprises 261 residues: Monopolin complex subunit pcs1 (261 aa).

The disordered stretch occupies residues 1–42 (MRKNNMQTSKDSELKEQAKGKSSKLIHKLPKQRTRISQGQMH). The span at 10–19 (KDSELKEQAK) shows a compositional bias: basic and acidic residues. Positions 21–34 (KSSKLIHKLPKQRT) are enriched in basic residues. A coiled-coil region spans residues 91–170 (HTQEQEFNEL…EQIKNYSKIN (80 aa)).

In terms of assembly, component of a monopolin-like complex composed of pcs1 and mde4. The complex associates with the kinetochore.

It is found in the nucleus. Its subcellular location is the nucleolus. The protein resides in the chromosome. It localises to the centromere. Its function is as follows. The monopolin-like pcs1/mde4 complex is essential for accurate chromosome segregation during mitosis and meiosis II. May clamp together microtubule binding sites on the same kinetochore, preventing merotelic attachment of microtubules. In contrast to its S.cerevisiae ortholog CSM1, is not required ofr mono-orientation during meiosis I. The polypeptide is Monopolin complex subunit pcs1 (pcs1) (Schizosaccharomyces pombe (strain 972 / ATCC 24843) (Fission yeast)).